Consider the following 390-residue polypeptide: Leucine aminopeptidase 1 (390 aa).

The first 18 residues, 1–18 (MKLSTALVLGATATGAWS), serve as a signal peptide directing secretion. The propeptide occupies 19–90 (YAIPQLEQEV…FPTLDAGSYV (72 aa)). Asn120 carries N-linked (GlcNAc...) asparagine glycosylation. His190, Asp209, Glu248, and Asp275 together coordinate Zn(2+). The cysteines at positions 324 and 328 are disulfide-linked. His357 lines the Zn(2+) pocket.

This sequence belongs to the peptidase M28 family. M28E subfamily. As to quaternary structure, monomer. The cofactor is Zn(2+).

Its subcellular location is the secreted. In terms of biological role, extracellular aminopeptidase that allows assimilation of proteinaceous substrates. This Emericella nidulans (strain FGSC A4 / ATCC 38163 / CBS 112.46 / NRRL 194 / M139) (Aspergillus nidulans) protein is Leucine aminopeptidase 1 (lap1).